Here is a 473-residue protein sequence, read N- to C-terminus: MAP kinase-activated protein kinase 5 (473 aa).

In terms of domain architecture, Protein kinase spans 22 to 304; the sequence is INWTQKLGAG…IEGVLDHPWL (283 aa). ATP is bound by residues 28–36 and Lys51; that span reads LGAGISGPV. Phosphoserine; by PKA is present on Ser115. The active-site Proton acceptor is Asp148. At Thr182 the chain carries Phosphothreonine; by MAPK11, MAPK14, MAPK4, MAPK6 and PKA. Ser212 and Ser354 each carry phosphoserine. A coiled-coil region spans residues 409 to 440; that stretch reads ENEDEKLNEVMQEAWKYNRECKLLRDALQSFS.

This sequence belongs to the protein kinase superfamily. CAMK Ser/Thr protein kinase family. In terms of assembly, interacts with SQSTM1. Interacts with ERK3/MAPK6 and ERK4/MAPK4 (via FRIEDE motif); the interaction is direct. Interacts with YWHAE; the interaction prevents phosphorylation of HSP27/HSPB1 leading to disrupt F-actin polymerization. In terms of processing, phosphorylated on Thr-182 ERK3/MAPK6 or ERK4/MAPK4; which is the regulatory phosphorylation site and is located on the T-loop/loop 12, leading to activation. Phosphorylation at Thr-182 by p38-alpha/MAPK14, p38-beta/MAPK11 is subject to debate. Phosphorylated at Ser-115 by PKA/PRKACA, leading to localization to the cytoplasm. Autophosphorylated. As to expression, expressed ubiquitously.

The protein localises to the cytoplasm. Its subcellular location is the nucleus. The catalysed reaction is L-seryl-[protein] + ATP = O-phospho-L-seryl-[protein] + ADP + H(+). It catalyses the reaction L-threonyl-[protein] + ATP = O-phospho-L-threonyl-[protein] + ADP + H(+). With respect to regulation, activated following phosphorylation at Thr-182 by p38-alpha/MAPK14, p38-beta/MAPK11, ERK2/MAPK1, ERK3/MAPK6, and ERK4/MAPK4. Activated by stress-related extracellular stimuli; such as H(2)O(2), arsenite, anisomycin TNF alpha and also PMA and the calcium ionophore A23187; but to a lesser extent. In vitro, activated by SQSTM1. Inhibited by diterpenoid alkaloid noroxoaconitine. Tumor suppressor serine/threonine-protein kinase involved in mTORC1 signaling and post-transcriptional regulation. Phosphorylates FOXO3, ERK3/MAPK6, ERK4/MAPK4, HSP27/HSPB1, p53/TP53 and RHEB. Acts as a tumor suppressor by mediating Ras-induced senescence and phosphorylating p53/TP53. Involved in post-transcriptional regulation of MYC by mediating phosphorylation of FOXO3: phosphorylation of FOXO3 leads to promote nuclear localization of FOXO3, enabling expression of miR-34b and miR-34c, 2 post-transcriptional regulators of MYC that bind to the 3'UTR of MYC transcript and prevent MYC translation. Acts as a negative regulator of mTORC1 signaling by mediating phosphorylation and inhibition of RHEB. Part of the atypical MAPK signaling via its interaction with ERK3/MAPK6 or ERK4/MAPK4: the precise role of the complex formed with ERK3/MAPK6 or ERK4/MAPK4 is still unclear, but the complex follows a complex set of phosphorylation events: upon interaction with atypical MAPK (ERK3/MAPK6 or ERK4/MAPK4), ERK3/MAPK6 (or ERK4/MAPK4) is phosphorylated and then mediates phosphorylation and activation of MAPKAPK5, which in turn phosphorylates ERK3/MAPK6 (or ERK4/MAPK4). Mediates phosphorylation of HSP27/HSPB1 in response to PKA/PRKACA stimulation, inducing F-actin rearrangement. The protein is MAP kinase-activated protein kinase 5 (Mapkapk5) of Mus musculus (Mouse).